The primary structure comprises 510 residues: MNRGNALLVLAVFVVASCGLAYELIAGALASYLLGDSILQFSSIIGAYLFAMGIGSWVSRYVADDALLARFVDLELLVGLFGGVSAAALFLLFALESAPFRLVLYALVTVIGVLVGMEIPLVMRMLHRRQAKFSDLVSRVLTFDYLGALAVSLLFPLVLAPRLGLVRTGFLFGLCNTAIAVWTLWHFRAELGLSARLRGAMAWRAGMVGAALLAGFAASDRLTHWSERALFGDEIIHAISSPYQRLVVTRWKDDLRLYINGNLQFSSRDEYRYHEALVLPALESVRGARRVLVLGGGDGLALRQILKYPQVEHVTLVDLDPRMTSLFSHAEALVALNQHAFSDPRVTVVNADAGQWLQTAADMFDVAIVDFPDPSNFSIGKLYSVPFYRLLSRHVADTGLVVIQATSPYFAPRSYWCVDATLKEAGYRTWPYHALVPSFGEWGFILAAPGRADFRPPTTYRVPTRFLDADTTHQMFSFAPDMPRPQVEPNRLNNQSLVRYFEEDWHGVLR.

A run of 6 helical transmembrane segments spans residues 6-26 (ALLVLAVFVVASCGLAYELIA), 38-58 (ILQFSSIIGAYLFAMGIGSWV), 74-94 (LELLVGLFGGVSAAALFLLFA), 102-122 (LVLYALVTVIGVLVGMEIPLV), 140-160 (VLTFDYLGALAVSLLFPLVLA), and 165-185 (LVRTGFLFGLCNTAIAVWTLW). The 245-residue stretch at 205–449 (AGMVGAALLA…GEWGFILAAP (245 aa)) folds into the PABS domain. Residues 207–456 (MVGAALLAGF…AAPGRADFRP (250 aa)) form a spermidine synthase region. Q244 serves as a coordination point for S-methyl-5'-thioadenosine. 2 residues coordinate spermidine: H274 and D298. S-methyl-5'-thioadenosine-binding positions include D318 and 352 to 353 (DA). D370 serves as the catalytic Proton acceptor.

The protein belongs to the spermidine/spermine synthase family. Homodimer or homotetramer.

Its subcellular location is the cell membrane. It carries out the reaction S-adenosyl 3-(methylsulfanyl)propylamine + putrescine = S-methyl-5'-thioadenosine + spermidine + H(+). It functions in the pathway amine and polyamine biosynthesis; spermidine biosynthesis; spermidine from putrescine: step 1/1. In terms of biological role, catalyzes the irreversible transfer of a propylamine group from the amino donor S-adenosylmethioninamine (decarboxy-AdoMet) to putrescine (1,4-diaminobutane) to yield spermidine. This is Polyamine aminopropyltransferase 2 from Ralstonia nicotianae (strain ATCC BAA-1114 / GMI1000) (Ralstonia solanacearum).